Consider the following 161-residue polypeptide: Cyclic pyranopterin monophosphate synthase (161 aa).

Residues 78–80 and 116–117 contribute to the substrate site; these read LCH and ME. Residue Asp-131 is part of the active site.

This sequence belongs to the MoaC family. In terms of assembly, homohexamer; trimer of dimers.

It catalyses the reaction (8S)-3',8-cyclo-7,8-dihydroguanosine 5'-triphosphate = cyclic pyranopterin phosphate + diphosphate. Its pathway is cofactor biosynthesis; molybdopterin biosynthesis. In terms of biological role, catalyzes the conversion of (8S)-3',8-cyclo-7,8-dihydroguanosine 5'-triphosphate to cyclic pyranopterin monophosphate (cPMP). The chain is Cyclic pyranopterin monophosphate synthase from Bordetella parapertussis (strain 12822 / ATCC BAA-587 / NCTC 13253).